The sequence spans 215 residues: tRNA (guanine-N(7)-)-methyltransferase (215 aa).

S-adenosyl-L-methionine is bound by residues glutamate 43, glutamate 68, aspartate 95, and aspartate 117. Aspartate 117 is a catalytic residue. Substrate contacts are provided by residues lysine 121, aspartate 153, and 190–193 (TEYE).

It belongs to the class I-like SAM-binding methyltransferase superfamily. TrmB family.

It carries out the reaction guanosine(46) in tRNA + S-adenosyl-L-methionine = N(7)-methylguanosine(46) in tRNA + S-adenosyl-L-homocysteine. It functions in the pathway tRNA modification; N(7)-methylguanine-tRNA biosynthesis. Catalyzes the formation of N(7)-methylguanine at position 46 (m7G46) in tRNA. This chain is tRNA (guanine-N(7)-)-methyltransferase, found in Staphylococcus epidermidis (strain ATCC 35984 / DSM 28319 / BCRC 17069 / CCUG 31568 / BM 3577 / RP62A).